Reading from the N-terminus, the 265-residue chain is Pre-protein VI (265 aa).

A propeptide spanning residues 1–33 (MEDINFSSLAPRHGTRPYMGTWNEIGTSQLNGG) is cleaved from the precursor. The amphipathic alpha-helix essential for membrane lytic activity stretch occupies residues 34–54 (AFNWNSIWSGLKNFGSTIKTY). The interval 36-53 (NWNSIWSGLKNFGSTIKT) is involved in endosomal membrane lysis. The tract at residues 48–74 (GSTIKTYGTKAWNSQTGQMLRDKLKDQ) is interaction with hexon protein. The short motif at 67-76 (LRDKLKDQNF) is the Nuclear export signal element. Positions 123 to 155 (LETVPGSVPTKGEKRPRPDAEETLVTHTTEPPS) are disordered. Positions 133–142 (KGEKRPRPDA) are enriched in basic and acidic residues. The Nuclear localization signal motif lies at 136–140 (KRPRP). Residue threonine 148 is modified to Phosphothreonine; by host. The short motif at 153–156 (PPSY) is the PPXY motif element. The Nuclear export signal signature appears at 246 to 257 (STLNSIVGLGVK). Positions 248–254 (LNSIVGL) are interaction with hexon protein. A binds to importin alpha/beta, involved in hexon nuclear import region spans residues 255 to 265 (GVKSLKRRRCY). The short motif at 260 to 263 (KRRR) is the Nuclear localization signal element.

The protein belongs to the adenoviridae protein VI family. Interacts with hexon protein; this interaction allows nuclear import of hexon trimers and possibly pre-capsid assembly. Interacts (via C-terminal NLS) with importin alpha/beta. In terms of assembly, interacts (via PPxY motif) with host NEDD4 ubiquitine ligase; this interaction might play a role in virus intracellular transport during entry. Part of a complex composed of the core-capsid bridging protein, the endosome lysis protein VI and the hexon-linking protein VIII; these interactions bridge the virus core to the capsid. Interacts with peripentonal hexons; this interaction stabilizes the capsid by gluing two peripentonal hexons together and joining them with an adjacent group-of-nine hexon. As to quaternary structure, heterodimer with the viral protease; disulfide-linked. Interacts with the viral protease. Post-translationally, ubiquitinated by Nedd4 following partial capsid disassembly; which might play a role in intracellular virus movement during entry. Contains the major nuclear import and export signals. Proteolytically removed during virion maturation. The processing of the C-terminus turns the precursor into a mature viral structural protein and abrogates its ability to promote hexon import and act as a potential chaperone protein.

Its subcellular location is the host nucleus. The protein localises to the host cytoplasm. It localises to the virion. Its function is as follows. During virus assembly, promotes hexon trimers nuclear import through nuclear pore complexes via an importin alpha/beta-dependent mechanism. By analogy to herpesviruses capsid assembly, might act as a chaperone to promote the formation of the icosahedral capsid. In terms of biological role, structural component of the virion that provides increased stability to the particle shell through its interaction with the core-capsid bridging protein and the hexon-linking protein VIII. Fibers shedding during virus entry into host cell allows the endosome lysis protein to be exposed as a membrane-lytic peptide. Exhibits pH-independent membrane fragmentation activity and probably mediates viral rapid escape from host endosome via organellar membrane lysis. It is not clear if it then remains partially associated with the capsid and involved in the intracellular microtubule-dependent transport of capsid to the nucleus, or if it is lost during endosomal penetration. Cofactor that activates the viral protease. Binds to viral protease in a 1:1 ratio. In Human adenovirus A serotype 12 (HAdV-12), this protein is Pre-protein VI.